Consider the following 385-residue polypeptide: Chaperone protein DnaJ 2 (385 aa).

Positions 10–75 constitute a J domain; the sequence is DYYKELGVSS…AKRKEYDETR (66 aa). The CR-type zinc finger occupies 155-233; sequence GVTVPLRMTS…CHGSGIQNRT (79 aa). Zn(2+)-binding residues include C168, C171, C185, C188, C207, C210, C221, and C224. CXXCXGXG motif repeat units lie at residues 168–175, 185–192, 207–214, and 221–228; these read CTTCHGSG, CPICNGTG, CDGCRGTG, and CVDCHGSG.

The protein belongs to the DnaJ family. As to quaternary structure, homodimer. The cofactor is Zn(2+).

Its subcellular location is the cytoplasm. Participates actively in the response to hyperosmotic and heat shock by preventing the aggregation of stress-denatured proteins and by disaggregating proteins, also in an autonomous, DnaK-independent fashion. Unfolded proteins bind initially to DnaJ; upon interaction with the DnaJ-bound protein, DnaK hydrolyzes its bound ATP, resulting in the formation of a stable complex. GrpE releases ADP from DnaK; ATP binding to DnaK triggers the release of the substrate protein, thus completing the reaction cycle. Several rounds of ATP-dependent interactions between DnaJ, DnaK and GrpE are required for fully efficient folding. Also involved, together with DnaK and GrpE, in the DNA replication of plasmids through activation of initiation proteins. This Nocardia farcinica (strain IFM 10152) protein is Chaperone protein DnaJ 2.